The sequence spans 225 residues: Biosynthetic peptidoglycan transglycosylase (225 aa).

A helical membrane pass occupies residues 12–32 (IWFVAWRFLLLFVIVLFLFRF).

This sequence belongs to the glycosyltransferase 51 family.

It localises to the cell inner membrane. The enzyme catalyses [GlcNAc-(1-&gt;4)-Mur2Ac(oyl-L-Ala-gamma-D-Glu-L-Lys-D-Ala-D-Ala)](n)-di-trans,octa-cis-undecaprenyl diphosphate + beta-D-GlcNAc-(1-&gt;4)-Mur2Ac(oyl-L-Ala-gamma-D-Glu-L-Lys-D-Ala-D-Ala)-di-trans,octa-cis-undecaprenyl diphosphate = [GlcNAc-(1-&gt;4)-Mur2Ac(oyl-L-Ala-gamma-D-Glu-L-Lys-D-Ala-D-Ala)](n+1)-di-trans,octa-cis-undecaprenyl diphosphate + di-trans,octa-cis-undecaprenyl diphosphate + H(+). It participates in cell wall biogenesis; peptidoglycan biosynthesis. Its function is as follows. Peptidoglycan polymerase that catalyzes glycan chain elongation from lipid-linked precursors. This Marinomonas sp. (strain MWYL1) protein is Biosynthetic peptidoglycan transglycosylase.